A 372-amino-acid chain; its full sequence is GTPase Obg (372 aa).

In terms of domain architecture, Obg spans 1-159 (MKFVDEATIE…RRLRLELKVL (159 aa)). Residues 160–336 (ADVGLLGLPN…LIWALQDYLD (177 aa)) enclose the OBG-type G domain. GTP contacts are provided by residues 166-173 (GLPNAGKS), 191-195 (FTTLH), 213-216 (DIPG), 288-291 (NKLD), and 317-319 (SGL). Ser-173 and Thr-193 together coordinate Mg(2+). The segment at 341-372 (KEQITQDKADGSYVHEDPRFDTTRDAPPSGKD) is disordered.

Belongs to the TRAFAC class OBG-HflX-like GTPase superfamily. OBG GTPase family. As to quaternary structure, monomer. The cofactor is Mg(2+).

Its subcellular location is the cytoplasm. Its function is as follows. An essential GTPase which binds GTP, GDP and possibly (p)ppGpp with moderate affinity, with high nucleotide exchange rates and a fairly low GTP hydrolysis rate. Plays a role in control of the cell cycle, stress response, ribosome biogenesis and in those bacteria that undergo differentiation, in morphogenesis control. The polypeptide is GTPase Obg (Bordetella avium (strain 197N)).